The following is a 103-amino-acid chain: N(4)-acetylcytidine amidohydrolase (103 aa).

Positions 6-92 (TFFERFEQDI…VIQEIYPGLE (87 aa)) constitute an ASCH domain. Catalysis depends on lysine 20, which acts as the Proton acceptor. Threonine 23 (nucleophile) is an active-site residue. Glutamate 73 (proton donor) is an active-site residue.

The protein belongs to the N(4)-acetylcytidine amidohydrolase family.

It carries out the reaction N(4)-acetylcytidine + H2O = cytidine + acetate + H(+). It catalyses the reaction N(4)-acetyl-2'-deoxycytidine + H2O = 2'-deoxycytidine + acetate + H(+). The enzyme catalyses N(4)-acetylcytosine + H2O = cytosine + acetate + H(+). Functionally, catalyzes the hydrolysis of N(4)-acetylcytidine (ac4C). This Shewanella sp. (strain MR-4) protein is N(4)-acetylcytidine amidohydrolase.